Here is a 337-residue protein sequence, read N- to C-terminus: Phosphate acyltransferase (337 aa).

The protein belongs to the PlsX family. In terms of assembly, homodimer. Probably interacts with PlsY.

It localises to the cytoplasm. It catalyses the reaction a fatty acyl-[ACP] + phosphate = an acyl phosphate + holo-[ACP]. It functions in the pathway lipid metabolism; phospholipid metabolism. Its function is as follows. Catalyzes the reversible formation of acyl-phosphate (acyl-PO(4)) from acyl-[acyl-carrier-protein] (acyl-ACP). This enzyme utilizes acyl-ACP as fatty acyl donor, but not acyl-CoA. The sequence is that of Phosphate acyltransferase from Aquifex aeolicus (strain VF5).